A 329-amino-acid polypeptide reads, in one-letter code: Ankyrin repeat and SOCS box protein 5 (329 aa).

6 ANK repeats span residues 69 to 98 (ADRS…NVNA), 102 to 131 (DHVT…NVNA), 135 to 164 (DGVT…KAQL), 167 to 196 (CLPS…DVDQ), 200 to 229 (HLGT…DVQK), and 232 to 261 (YWDT…DINA). The region spanning 278–329 (MVERILLQHEATPSSLYQLCRLCIRSYIGKPRLHLIPQLQLPTLLKNFLQYR) is the SOCS box domain.

This sequence belongs to the ankyrin SOCS box (ASB) family.

The protein operates within protein modification; protein ubiquitination. Its function is as follows. May be a substrate-recognition component of a SCF-like ECS (Elongin-Cullin-SOCS-box protein) E3 ubiquitin-protein ligase complex which mediates the ubiquitination and subsequent proteasomal degradation of target proteins. May play a role in the initiation of arteriogenesis. This chain is Ankyrin repeat and SOCS box protein 5 (ASB5), found in Homo sapiens (Human).